Consider the following 384-residue polypeptide: Outer membrane protein assembly factor BamB (384 aa).

A signal peptide spans 1–21; that stretch reads MKLTLKRKFIAVLALTSLLGA. Cys-22 carries N-palmitoyl cysteine lipidation. Cys-22 carries the S-diacylglycerol cysteine lipid modification.

It belongs to the BamB family. In terms of assembly, part of the Bam complex.

It localises to the cell outer membrane. Functionally, part of the outer membrane protein assembly complex, which is involved in assembly and insertion of beta-barrel proteins into the outer membrane. The protein is Outer membrane protein assembly factor BamB of Taylorella asinigenitalis (strain MCE3).